We begin with the raw amino-acid sequence, 166 residues long: MTQSAPEFIATADLVDIIGDNAQSCDTQFQNLGGATEFHGIITTVKCFQDNALLKSILSEDNPGGVLVIDGDASVHTALVGDIIAGLGKDHGWSGVIVNGAIRDSAVIGTMTFGCKALGTNPRKSTKTGSGERDVVVSIGGIDFIPGHYVYADSDGIIVTEAPIKQ.

Residues 81–84 and Arg-103 each bind substrate; that span reads GDII. Residue Asp-104 coordinates a divalent metal cation.

This sequence belongs to the class II aldolase/RraA-like family. As to quaternary structure, homotrimer. Requires a divalent metal cation as cofactor.

It carries out the reaction 4-hydroxy-4-methyl-2-oxoglutarate = 2 pyruvate. The enzyme catalyses oxaloacetate + H(+) = pyruvate + CO2. Catalyzes the aldol cleavage of 4-hydroxy-4-methyl-2-oxoglutarate (HMG) into 2 molecules of pyruvate. Also contains a secondary oxaloacetate (OAA) decarboxylase activity due to the common pyruvate enolate transition state formed following C-C bond cleavage in the retro-aldol and decarboxylation reactions. The chain is Putative 4-hydroxy-4-methyl-2-oxoglutarate aldolase from Corynebacterium glutamicum (strain ATCC 13032 / DSM 20300 / JCM 1318 / BCRC 11384 / CCUG 27702 / LMG 3730 / NBRC 12168 / NCIMB 10025 / NRRL B-2784 / 534).